A 303-amino-acid chain; its full sequence is Pyridoxal 5'-phosphate synthase subunit PdxS (303 aa).

Asp-33 lines the D-ribose 5-phosphate pocket. Residue Lys-90 is the Schiff-base intermediate with D-ribose 5-phosphate of the active site. Gly-162 contacts D-ribose 5-phosphate. Position 174 (Arg-174) interacts with D-glyceraldehyde 3-phosphate. D-ribose 5-phosphate is bound by residues Gly-223 and 244-245; that span reads GS.

Belongs to the PdxS/SNZ family. In terms of assembly, in the presence of PdxT, forms a dodecamer of heterodimers.

The catalysed reaction is aldehydo-D-ribose 5-phosphate + D-glyceraldehyde 3-phosphate + L-glutamine = pyridoxal 5'-phosphate + L-glutamate + phosphate + 3 H2O + H(+). Its pathway is cofactor biosynthesis; pyridoxal 5'-phosphate biosynthesis. Catalyzes the formation of pyridoxal 5'-phosphate from ribose 5-phosphate (RBP), glyceraldehyde 3-phosphate (G3P) and ammonia. The ammonia is provided by the PdxT subunit. Can also use ribulose 5-phosphate and dihydroxyacetone phosphate as substrates, resulting from enzyme-catalyzed isomerization of RBP and G3P, respectively. The sequence is that of Pyridoxal 5'-phosphate synthase subunit PdxS from Mycobacterium avium (strain 104).